A 283-amino-acid polypeptide reads, in one-letter code: MLRIAVQAKGRLFEETMALLGESDIKISTTKRTLLVQSSNFPIEVLFLRDDDIPQTVATGVADLGIVGENEFMEKEEDAEIIKRLGFSKCRLSLAMPKDIEYPGLSWFNGKKIATSYPVILRNFLKKNGVNAEIHVITGSVEVSPGIGLADAIFDIVSSGSTLVSNRLKEVEVVMKSEALLIGNKNMSDEKKEVLEELLFRMNAVKTAEDKKYVLMNAPKDKLEEIIAVLPGMKSPTIMPLAQEGWCSVHTVLDEKRFWEIIGKLKGLGAEGILVLPIEKMIV.

The protein belongs to the ATP phosphoribosyltransferase family. Long subfamily. It depends on Mg(2+) as a cofactor.

It localises to the cytoplasm. The enzyme catalyses 1-(5-phospho-beta-D-ribosyl)-ATP + diphosphate = 5-phospho-alpha-D-ribose 1-diphosphate + ATP. The protein operates within amino-acid biosynthesis; L-histidine biosynthesis; L-histidine from 5-phospho-alpha-D-ribose 1-diphosphate: step 1/9. Its activity is regulated as follows. Feedback inhibited by histidine. Functionally, catalyzes the condensation of ATP and 5-phosphoribose 1-diphosphate to form N'-(5'-phosphoribosyl)-ATP (PR-ATP). Has a crucial role in the pathway because the rate of histidine biosynthesis seems to be controlled primarily by regulation of HisG enzymatic activity. The protein is ATP phosphoribosyltransferase of Bacteroides thetaiotaomicron (strain ATCC 29148 / DSM 2079 / JCM 5827 / CCUG 10774 / NCTC 10582 / VPI-5482 / E50).